The primary structure comprises 646 residues: Calcium-dependent protein kinase 2 (646 aa).

A lipid anchor (N-myristoyl glycine) is attached at Gly-2. Cys-5 carries the S-palmitoyl cysteine lipid modification. A disordered region spans residues 27-169 (RIGAEQASSS…HMRRVSSAGL (143 aa)). Residues 32–43 (QASSSSHGNGQV) show a composition bias toward polar residues. Basic and acidic residues-rich tracts occupy residues 73-119 (PETK…KREV) and 126-157 (AKPETKSESKPETTKPETTSETKPETKAEPQK). Residues 186-444 (YSLGRKLGQG…AHQVLCHPWV (259 aa)) form the Protein kinase domain. ATP contacts are provided by residues 192–200 (LGQGQFGTT) and Lys-215. The Proton acceptor role is filled by Asp-310. Position 350 is a phosphoserine (Ser-350). Residues 450-480 (APDKPLDSAVLSRMKQFSAMNKFKKMALRVI) form an autoinhibitory domain region. EF-hand domains lie at 487–522 (EEIAGLKQMFKMIDADNSGQITFEELKAGLKRVGAN), 523–558 (LKESEILDLMQAADVDNSGTIDYKEFIAATLHLNKI), 559–592 (EREDHLFAAFSYFDKDESGFITPDELQQACEEFG), and 593–628 (VEDARIEEMMRDVDQDKDGRIDYNEFVAMMQKGSIM). Ca(2+) contacts are provided by Asp-500, Asp-502, Ser-504, Gln-506, Glu-511, Asp-536, Asp-538, Ser-540, Thr-542, Glu-547, Asp-572, Asp-574, Ser-576, Glu-583, Asp-606, Asp-608, Asp-610, Arg-612, and Glu-617.

This sequence belongs to the protein kinase superfamily. Ser/Thr protein kinase family. CDPK subfamily. As to quaternary structure, interacts with 14-3-3 proteins.

It localises to the endoplasmic reticulum membrane. The catalysed reaction is L-seryl-[protein] + ATP = O-phospho-L-seryl-[protein] + ADP + H(+). It carries out the reaction L-threonyl-[protein] + ATP = O-phospho-L-threonyl-[protein] + ADP + H(+). Activated by calcium. Autophosphorylation may play an important role in the regulation of the kinase activity. May play a role in signal transduction pathways that involve calcium as a second messenger. This Arabidopsis thaliana (Mouse-ear cress) protein is Calcium-dependent protein kinase 2 (CPK2).